Consider the following 289-residue polypeptide: Oxaloacetate decarboxylase (289 aa).

Ser-50 is a binding site for substrate. Residue Asp-88 coordinates Mg(2+). The substrate site is built by Arg-159 and His-235.

Belongs to the isocitrate lyase/PEP mutase superfamily. Oxaloacetate decarboxylase family. In terms of assembly, homotetramer; dimer of dimers. Mg(2+) serves as cofactor.

It carries out the reaction oxaloacetate + H(+) = pyruvate + CO2. In terms of biological role, catalyzes the decarboxylation of oxaloacetate into pyruvate. Seems to play a role in maintaining cellular concentrations of bicarbonate and pyruvate. This Pseudomonas putida (strain ATCC 47054 / DSM 6125 / CFBP 8728 / NCIMB 11950 / KT2440) protein is Oxaloacetate decarboxylase.